We begin with the raw amino-acid sequence, 72 residues long: Multiple antibiotic resistance protein MarB (72 aa).

This Escherichia coli (strain K12) protein is Multiple antibiotic resistance protein MarB (marB).